Consider the following 561-residue polypeptide: Long-chain-fatty-acid--CoA ligase (561 aa).

Residue 213 to 224 (YTGGTTGVAKGA) participates in ATP binding.

Belongs to the ATP-dependent AMP-binding enzyme family. The cofactor is Mg(2+).

The protein localises to the membrane. It carries out the reaction a long-chain fatty acid + ATP + CoA = a long-chain fatty acyl-CoA + AMP + diphosphate. The protein operates within lipid metabolism; fatty acid beta-oxidation. Catalyzes the esterification, concomitant with transport, of exogenous long-chain fatty acids into metabolically active CoA thioesters for subsequent degradation or incorporation into phospholipids. The polypeptide is Long-chain-fatty-acid--CoA ligase (fadD) (Escherichia coli O6:H1 (strain CFT073 / ATCC 700928 / UPEC)).